Here is a 200-residue protein sequence, read N- to C-terminus: Mediator of RNA polymerase II transcription subunit 29 (200 aa).

Low complexity-rich tracts occupy residues methionine 1–serine 21 and alanine 36–glutamine 48. Residues methionine 1–glutamine 48 form a disordered region. At alanine 2 the chain carries N-acetylalanine.

It belongs to the Mediator complex subunit 29 family. Component of the Mediator complex, which is composed of MED1, MED4, MED6, MED7, MED8, MED9, MED10, MED11, MED12, MED13, MED13L, MED14, MED15, MED16, MED17, MED18, MED19, MED20, MED21, MED22, MED23, MED24, MED25, MED26, MED27, MED29, MED30, MED31, CCNC, CDK8 and CDC2L6/CDK11. The MED12, MED13, CCNC and CDK8 subunits form a distinct module termed the CDK8 module. Mediator containing the CDK8 module is less active than Mediator lacking this module in supporting transcriptional activation. Individual preparations of the Mediator complex lacking one or more distinct subunits have been variously termed ARC, CRSP, DRIP, PC2, SMCC and TRAP. Associates with the MED18/MED20 heteromer.

It is found in the nucleus. Functionally, component of the Mediator complex, a coactivator involved in the regulated transcription of nearly all RNA polymerase II-dependent genes. Mediator functions as a bridge to convey information from gene-specific regulatory proteins to the basal RNA polymerase II transcription machinery. Mediator is recruited to promoters by direct interactions with regulatory proteins and serves as a scaffold for the assembly of a functional preinitiation complex with RNA polymerase II and the general transcription factors. This is Mediator of RNA polymerase II transcription subunit 29 (MED29) from Pongo abelii (Sumatran orangutan).